The primary structure comprises 409 residues: Arginine deiminase (409 aa).

Catalysis depends on Cys399, which acts as the Amidino-cysteine intermediate.

It belongs to the arginine deiminase family.

The protein localises to the cytoplasm. It carries out the reaction L-arginine + H2O = L-citrulline + NH4(+). It participates in amino-acid degradation; L-arginine degradation via ADI pathway; carbamoyl phosphate from L-arginine: step 1/2. This Streptococcus gordonii (strain Challis / ATCC 35105 / BCRC 15272 / CH1 / DL1 / V288) protein is Arginine deiminase.